The sequence spans 245 residues: 14-3-3 protein theta (245 aa).

Belongs to the 14-3-3 family. As to quaternary structure, homodimer, and heterodimer with other family members.

The protein localises to the cytoplasm. In terms of biological role, adapter protein implicated in the regulation of a large spectrum of both general and specialized signaling pathways. Binds to a large number of partners, usually by recognition of a phosphoserine or phosphothreonine motif. Binding generally results in the modulation of the activity of the binding partner. This is 14-3-3 protein theta (YWHAQ) from Gallus gallus (Chicken).